A 1279-amino-acid polypeptide reads, in one-letter code: Botulinum-like toxin eBoNT/J (1279 aa).

H225 is a binding site for Zn(2+). The active site involves E226. Positions 229 and 269 each coordinate Zn(2+). Cysteines 424 and 438 form a disulfide. The tract at residues 435 to 843 (LSSCIEILED…RLTSLPVFNL (409 aa)) is translocation domain (TD). The segment at 476–525 (ADTILDSTLSNYDFSKEINFTSTVPIITVEDPLETDEDVPVISEDRTVYV) is belt; not required for channel formation. The N-terminus of receptor binding domain (N-RBD) stretch occupies residues 860–1080 (IDIQDSEVLN…EVNRLYWKYF (221 aa)). The tract at residues 1081–1279 (EGSYLRDVWG…IPVDEGWKED (199 aa)) is C-terminus of receptor binding domain (C-RBD). The short motif at 1250–1253 (SAWY) is the Host ganglioside-binding motif element.

This sequence belongs to the peptidase M27 family. As to quaternary structure, might be a disulfide-linked heterodimer of a light chain (LC) and heavy chain (HC). Requires Zn(2+) as cofactor.

It is found in the secreted. The protein resides in the host cytoplasm. The protein localises to the host cytosol. Its subcellular location is the host cell membrane. It localises to the host cytoplasmic vesicle membrane. It carries out the reaction Limited hydrolysis of proteins of the neuroexocytosis apparatus, synaptobrevins, SNAP25 or syntaxin. No detected action on small molecule substrates.. Its function is as follows. Strongly resembles a botulinum-type toxin, with the appropriate domains and residues to have proteolytic function, although its C-terminus (which binds to a eukaryotic host cell) is different enough from clostrial botulinum toxins that it might bind another cell target. Might be a precursor of a toxin that binds to an unknown eukaryotic cell receptor(s), and be taken up into the host cell via the endocytic pathway. When the pH of the putative toxin-containing endosome drops a structural rearrangement occurs so that the N-terminus of the heavy chain forms pores that allows the light chain to translocate into the cytosol. Once in the cytosol the disulfide bond linking the 2 subunits is reduced and light chain cleaves its target protein. This chain is Botulinum-like toxin eBoNT/J, found in Enterococcus sp. (strain 3G1_DIV0629).